Here is a 699-residue protein sequence, read N- to C-terminus: Conditioned medium factor (699 aa).

The first 18 residues, 1 to 18, serve as a signal peptide directing secretion; that stretch reads MRLLLLLILIITINFSYG. N130, N283, N346, and N430 each carry an N-linked (GlcNAc...) asparagine glycan. Residues 680–699 are disordered; the sequence is SPQQTTNTEYNKEMSSNSVW.

N- and O-glycosylated. In terms of processing, the N-terminus is blocked.

Functionally, involved in cell density sensing and might synchronize the onset of development by triggering aggregation when a majority of the cells in a given area have starved. The sequence is that of Conditioned medium factor (cmfA) from Dictyostelium discoideum (Social amoeba).